We begin with the raw amino-acid sequence, 216 residues long: Potassium-transporting ATPase KdpC subunit (216 aa).

The helical transmembrane segment at 12–32 threads the bilayer; sequence LLGVSLLVFGLLYQGSLMAIG. The span at 197–207 shows a compositional bias: polar residues; sequence QNETDQNSDMN. The segment at 197-216 is disordered; sequence QNETDQNSDMNASEIANGDH.

Belongs to the KdpC family. As to quaternary structure, the system is composed of three essential subunits: KdpA, KdpB and KdpC. The complex also contains KdpF, a small non-essential subunit.

The protein localises to the cell membrane. Part of the high-affinity ATP-driven potassium transport (or Kdp) system, which catalyzes the hydrolysis of ATP coupled with the electrogenic transport of potassium into the cytoplasm. This subunit acts as a catalytic chaperone that increases the ATP-binding affinity of the ATP-hydrolyzing subunit KdpB by the formation of a transient KdpB/KdpC/ATP ternary complex. The Kdp system is essential for growth under K(+) limitation, and for survival under desiccation and salt crystal inclusion. This is Potassium-transporting ATPase KdpC subunit from Halobacterium salinarum (strain ATCC 29341 / DSM 671 / R1).